Reading from the N-terminus, the 195-residue chain is Adenylate kinase (195 aa).

8–16 (GIPGVGKTT) contacts ATP.

Belongs to the archaeal adenylate kinase family. Homotrimer.

The protein localises to the cytoplasm. It carries out the reaction AMP + ATP = 2 ADP. This is Adenylate kinase (adkA) from Saccharolobus solfataricus (strain ATCC 35092 / DSM 1617 / JCM 11322 / P2) (Sulfolobus solfataricus).